A 114-amino-acid chain; its full sequence is Holo-[acyl-carrier-protein] synthase (114 aa).

2 residues coordinate Mg(2+): aspartate 5 and glutamate 50.

Belongs to the P-Pant transferase superfamily. AcpS family. The cofactor is Mg(2+).

It localises to the cytoplasm. It carries out the reaction apo-[ACP] + CoA = holo-[ACP] + adenosine 3',5'-bisphosphate + H(+). Functionally, transfers the 4'-phosphopantetheine moiety from coenzyme A to a Ser of acyl-carrier-protein. The protein is Holo-[acyl-carrier-protein] synthase of Campylobacter curvus (strain 525.92).